A 403-amino-acid polypeptide reads, in one-letter code: Putative F-box protein At5g41500 (403 aa).

In terms of domain architecture, F-box spans 2–47 (ATTISNLPRELIEEILSRVPLRAMKAMRLTCKSWNNLSKSESFMKM).

The protein is Putative F-box protein At5g41500 of Arabidopsis thaliana (Mouse-ear cress).